A 140-amino-acid chain; its full sequence is Alpha-lactalbumin (140 aa).

The N-terminal stretch at 1 to 19 (MMSLLSLLLLGIALPATQA) is a signal peptide. Residues 20-140 (IDYRKCQASQ…CIEDLDQWRC (121 aa)) form the C-type lysozyme domain. Cystine bridges form between C25-C140, C47-C131, C80-C96, and C92-C110. N63 is a glycosylation site (N-linked (GlcNAc...) asparagine). Ca(2+)-binding residues include K98, D101, D103, D106, and D107.

The protein belongs to the glycosyl hydrolase 22 family. As to quaternary structure, lactose synthase (LS) is a heterodimer of a catalytic component, beta1,4-galactosyltransferase (beta4Gal-T1) and a regulatory component, alpha-lactalbumin (LA). Mammary gland specific. Secreted in milk.

Its subcellular location is the secreted. Functionally, regulatory subunit of lactose synthase, changes the substrate specificity of galactosyltransferase in the mammary gland making glucose a good acceptor substrate for this enzyme. This enables LS to synthesize lactose, the major carbohydrate component of milk. In other tissues, galactosyltransferase transfers galactose onto the N-acetylglucosamine of the oligosaccharide chains in glycoproteins. This Notamacropus eugenii (Tammar wallaby) protein is Alpha-lactalbumin (LALBA).